Consider the following 493-residue polypeptide: UDP-N-acetylmuramoyl-L-alanyl-D-glutamate--2,6-diaminopimelate ligase (493 aa).

Positions 30 and 32 each coordinate UDP-N-acetyl-alpha-D-muramoyl-L-alanyl-D-glutamate. 117–123 (GTNGKTT) contacts ATP. Residues Asn158, 159 to 160 (TT), Ser186, Gln192, and Arg194 contribute to the UDP-N-acetyl-alpha-D-muramoyl-L-alanyl-D-glutamate site. Lys226 bears the N6-carboxylysine mark. Meso-2,6-diaminopimelate is bound by residues Arg388, 412–415 (DNPR), Gly463, and Glu467. The Meso-diaminopimelate recognition motif signature appears at 412-415 (DNPR).

It belongs to the MurCDEF family. MurE subfamily. It depends on Mg(2+) as a cofactor. Carboxylation is probably crucial for Mg(2+) binding and, consequently, for the gamma-phosphate positioning of ATP.

Its subcellular location is the cytoplasm. It carries out the reaction UDP-N-acetyl-alpha-D-muramoyl-L-alanyl-D-glutamate + meso-2,6-diaminopimelate + ATP = UDP-N-acetyl-alpha-D-muramoyl-L-alanyl-gamma-D-glutamyl-meso-2,6-diaminopimelate + ADP + phosphate + H(+). It participates in cell wall biogenesis; peptidoglycan biosynthesis. In terms of biological role, catalyzes the addition of meso-diaminopimelic acid to the nucleotide precursor UDP-N-acetylmuramoyl-L-alanyl-D-glutamate (UMAG) in the biosynthesis of bacterial cell-wall peptidoglycan. The sequence is that of UDP-N-acetylmuramoyl-L-alanyl-D-glutamate--2,6-diaminopimelate ligase from Vibrio parahaemolyticus serotype O3:K6 (strain RIMD 2210633).